Reading from the N-terminus, the 184-residue chain is Protein Syd (184 aa).

Belongs to the Syd family.

Its subcellular location is the cell inner membrane. In terms of biological role, interacts with the SecY protein in vivo. May bind preferentially to an uncomplexed state of SecY, thus functioning either as a chelating agent for excess SecY in the cell or as a regulatory factor that negatively controls the translocase function. The chain is Protein Syd from Photorhabdus laumondii subsp. laumondii (strain DSM 15139 / CIP 105565 / TT01) (Photorhabdus luminescens subsp. laumondii).